Here is a 230-residue protein sequence, read N- to C-terminus: Urease accessory protein UreF (230 aa).

It belongs to the UreF family. As to quaternary structure, ureD, UreF and UreG form a complex that acts as a GTP-hydrolysis-dependent molecular chaperone, activating the urease apoprotein by helping to assemble the nickel containing metallocenter of UreC. The UreE protein probably delivers the nickel.

The protein localises to the cytoplasm. Functionally, required for maturation of urease via the functional incorporation of the urease nickel metallocenter. This chain is Urease accessory protein UreF, found in Chromohalobacter salexigens (strain ATCC BAA-138 / DSM 3043 / CIP 106854 / NCIMB 13768 / 1H11).